An 89-amino-acid polypeptide reads, in one-letter code: Otospiralin (89 aa).

A signal peptide spans 1–21 (MQACMVPGLALCLLLGPLAGA).

It belongs to the otospiralin family. In terms of tissue distribution, ear specific.

The protein resides in the secreted. Functionally, may be essential for the survival of the neurosensory epithelium of the inner ear. This chain is Otospiralin (OTOS), found in Homo sapiens (Human).